Reading from the N-terminus, the 1257-residue chain is Neural cell adhesion molecule L1 (1257 aa).

Positions methionine 1 to leucine 19 are cleaved as a signal peptide. At isoleucine 20 to glutamate 1120 the chain is on the extracellular side. Ig-like C2-type domains follow at residues proline 35–serine 125, proline 139–aspartate 226, proline 240–threonine 328, proline 333–tyrosine 420, proline 425–threonine 507, and threonine 518–leucine 607. 2 cysteine pairs are disulfide-bonded: cysteine 57–cysteine 114 and cysteine 158–cysteine 209. Residues asparagine 100, asparagine 203, asparagine 247, and asparagine 294 are each glycosylated (N-linked (GlcNAc...) asparagine). 2 cysteine pairs are disulfide-bonded: cysteine 264/cysteine 312 and cysteine 354/cysteine 404. Asparagine 433, asparagine 479, asparagine 490, and asparagine 505 each carry an N-linked (GlcNAc...) asparagine glycan. A disulfide bridge links cysteine 448 with cysteine 497. A disulfide bridge links cysteine 539 with cysteine 591. Residues arginine 554–aspartate 556 carry the Cell attachment site motif. 2 N-linked (GlcNAc...) asparagine glycosylation sites follow: asparagine 588 and asparagine 671. 5 consecutive Fibronectin type-III domains span residues valine 615–alanine 712, asparagine 717–aspartate 810, alanine 814–glycine 916, histidine 920–serine 1015, and glycine 1016–alanine 1115. Residues glycine 698–glycine 725 form a disordered region. A compositionally biased stretch (basic and acidic residues) spans alanine 713–glycine 725. 10 N-linked (GlcNAc...) asparagine glycosylation sites follow: asparagine 726, asparagine 777, asparagine 825, asparagine 849, asparagine 876, asparagine 979, asparagine 1022, asparagine 1030, asparagine 1071, and asparagine 1105. The chain crosses the membrane as a helical span at residues glycine 1121–isoleucine 1143. At lysine 1144–glutamate 1257 the chain is on the cytoplasmic side. Phosphoserine is present on residues serine 1163, threonine 1172, arginine 1177, and serine 1178. Over residues tyrosine 1176 to alanine 1187 the composition is skewed to basic and acidic residues. Disordered regions lie at residues tyrosine 1176–serine 1207 and isoleucine 1226–glutamate 1257. Serine 1181 bears the Phosphoserine; by CaMK2 mark. Serine 1194, serine 1243, serine 1244, and serine 1248 each carry phosphoserine. Over residues asparagine 1241–isoleucine 1250 the composition is skewed to polar residues.

The protein belongs to the immunoglobulin superfamily. L1/neurofascin/NgCAM family. In terms of assembly, interacts with SHTN1; the interaction occurs in axonal growth cones. Interacts with isoform 2 of BSG.

The protein resides in the cell membrane. It localises to the cell projection. The protein localises to the growth cone. It is found in the axon. Its subcellular location is the dendrite. Functionally, neural cell adhesion molecule involved in the dynamics of cell adhesion and in the generation of transmembrane signals at tyrosine kinase receptors. During brain development, critical in multiple processes, including neuronal migration, axonal growth and fasciculation, and synaptogenesis. In the mature brain, plays a role in the dynamics of neuronal structure and function, including synaptic plasticity. This Homo sapiens (Human) protein is Neural cell adhesion molecule L1 (L1CAM).